The primary structure comprises 289 residues: 4-hydroxy-tetrahydrodipicolinate synthase (289 aa).

Threonine 43 contacts pyruvate. The active-site Proton donor/acceptor is tyrosine 131. The Schiff-base intermediate with substrate role is filled by lysine 160. Isoleucine 200 contributes to the pyruvate binding site.

Belongs to the DapA family. As to quaternary structure, homotetramer; dimer of dimers.

It is found in the cytoplasm. It catalyses the reaction L-aspartate 4-semialdehyde + pyruvate = (2S,4S)-4-hydroxy-2,3,4,5-tetrahydrodipicolinate + H2O + H(+). Its pathway is amino-acid biosynthesis; L-lysine biosynthesis via DAP pathway; (S)-tetrahydrodipicolinate from L-aspartate: step 3/4. In terms of biological role, catalyzes the condensation of (S)-aspartate-beta-semialdehyde [(S)-ASA] and pyruvate to 4-hydroxy-tetrahydrodipicolinate (HTPA). In Methanococcus vannielii (strain ATCC 35089 / DSM 1224 / JCM 13029 / OCM 148 / SB), this protein is 4-hydroxy-tetrahydrodipicolinate synthase.